A 182-amino-acid polypeptide reads, in one-letter code: ADP-ribosylation factor 1 (182 aa).

The N-myristoyl glycine moiety is linked to residue Gly-2. Residues 3-16 are important for the stable binding to the membranes; the sequence is NVFANLFKGLFGKK. Residues 24–32, 126–129, and Ala-160 each bind GTP; these read GLDAAGKTT and NKQD.

This sequence belongs to the small GTPase superfamily. Arf family.

The protein resides in the golgi apparatus membrane. The protein localises to the cytoplasm. Its subcellular location is the cytosol. It carries out the reaction GTP + H2O = GDP + phosphate + H(+). With respect to regulation, alternates between an inactive GDP-bound form and an active GTP-bound form. Activated by a guanine nucleotide-exchange factor (GEF) and inactivated by GTPase-activating protein (GAP). Its function is as follows. Small GTPase involved in protein trafficking between different compartments. Modulates vesicle budding and uncoating within the Golgi complex. In its GTP-bound form, triggers the recruitment of coatomer proteins to the Golgi membrane. The hydrolysis of ARF1-bound GTP, which is mediated by ARFGAPs proteins, is required for dissociation of coat proteins from Golgi membranes and vesicles. Has a role in eye development. Required for cleavage furrow ingression in embryonic cells. This is ADP-ribosylation factor 1 from Drosophila melanogaster (Fruit fly).